The following is a 385-amino-acid chain: Protein delta homolog 1 (385 aa).

The signal sequence occupies residues 1–23; the sequence is MIATGALLRVLLLLLAFGHSTYG. EGF-like domains are found at residues 24–55, 53–86, 88–125, 127–168, 172–208, and 210–247; these read AECD…PLCD, LCDK…KFCE, DVRA…KDCQ, KAGP…NFCE, ATNS…KTCS, and PVSN…PTCA. The Extracellular segment spans residues 24–305; that stretch reads AECDPPCDPQ…KSTPLLTEGQ (282 aa). 12 cysteine pairs are disulfide-bonded: C26-C37, C30-C43, C45-C54, C57-C68, C63-C74, C76-C85, C92-C103, C97-C113, C115-C124, C131-C144, C138-C156, and C158-C167. The O-linked (GalNAc...) serine glycan is linked to S94. The N-linked (GlcNAc...) asparagine glycan is linked to N100. An N-linked (GlcNAc...) asparagine; atypical; partial glycan is attached at N165. N174 carries an N-linked (GlcNAc...) asparagine; atypical glycan. Intrachain disulfides connect C176/C187, C181/C196, C198/C207, C214/C225, C219/C235, and C237/C246. S216 carries an O-linked (GalNAc...) serine glycan. A glycan (O-linked (GalNAc...) threonine) is linked at T224. T258 is a glycosylation site (O-linked (GalNAc...) threonine). The O-linked (GalNAc...) threonine; partial glycan is linked to T267. The O-linked (GalNAc...) threonine glycan is linked to T271. The N-linked (GlcNAc...) asparagine glycan is linked to N295. The chain crosses the membrane as a helical span at residues 306–329; it reads AICFTILGVLTSLVVLGTVAIVFL. The Cytoplasmic segment spans residues 330–385; the sequence is NKCETWVSNLRYNHTFRKKKNLLLQYNSGEELAVNIIFPEKIDMTTFNKEAGDEEI.

In terms of assembly, monomer. Interacts with SH3RF2. Post-translationally, N- and O-glycosylated. Highly expressed in fetal liver, placenta, adult adrenal gland, brain, testis and ovary and, to a lesser degree, in adult kidney, muscle, thymus and heart.

It localises to the membrane. Its subcellular location is the cytoplasm. Functionally, may have a role in neuroendocrine differentiation. Inhibits adipocyte differentiation. This Mus musculus (Mouse) protein is Protein delta homolog 1 (Dlk1).